Consider the following 204-residue polypeptide: Tetraspanin-13 (204 aa).

Over methionine 1–leucine 19 the chain is Cytoplasmic. Residues tyrosine 20–isoleucine 40 form a helical membrane-spanning segment. The Extracellular portion of the chain corresponds to serine 41 to arginine 44. Residues valine 45–isoleucine 65 form a helical membrane-spanning segment. The Cytoplasmic segment spans residues glycine 66–glutamine 72. The chain crosses the membrane as a helical span at residues valine 73–serine 93. Over cysteine 94 to arginine 167 the chain is Extracellular. 2 N-linked (GlcNAc...) asparagine glycosylation sites follow: asparagine 113 and asparagine 137. Serine 143 is modified (phosphoserine). The helical transmembrane segment at phenylalanine 168–tyrosine 188 threads the bilayer. Residues arginine 189–leucine 204 are Cytoplasmic-facing.

This sequence belongs to the tetraspanin (TM4SF) family.

Its subcellular location is the membrane. The chain is Tetraspanin-13 (TSPAN13) from Bos taurus (Bovine).